The chain runs to 168 residues: Avenin-like a1 (168 aa).

Residues 1–19 (MKTMFLLALLAFTATSAVA) form the signal peptide.

Belongs to the prolamin family. Post-translationally, contains 7 disulfide bonds.

In terms of biological role, seed storage protein. Not integrated in the gluten polymer through disulfide bonds, unless incorporated by reduction and reoxidation during dough making. Increases dough strength and bread volume, but decreases dough stability when added into a base wheat flour. This is Avenin-like a1 (AVNLA) from Triticum aestivum (Wheat).